The chain runs to 254 residues: Proteasome subunit alpha (254 aa).

A disordered region spans residues 232–254 (PEVDSSESSNEAEAGAEKGSGES).

It belongs to the peptidase T1A family. The 20S proteasome core is composed of 14 alpha and 14 beta subunits that assemble into four stacked heptameric rings, resulting in a barrel-shaped structure. The two inner rings, each composed of seven catalytic beta subunits, are sandwiched by two outer rings, each composed of seven alpha subunits. The catalytic chamber with the active sites is on the inside of the barrel. Has a gated structure, the ends of the cylinder being occluded by the N-termini of the alpha-subunits. Is capped by the proteasome-associated ATPase, ARC.

It is found in the cytoplasm. Its pathway is protein degradation; proteasomal Pup-dependent pathway. Its activity is regulated as follows. The formation of the proteasomal ATPase ARC-20S proteasome complex, likely via the docking of the C-termini of ARC into the intersubunit pockets in the alpha-rings, may trigger opening of the gate for substrate entry. Interconversion between the open-gate and close-gate conformations leads to a dynamic regulation of the 20S proteasome proteolysis activity. Component of the proteasome core, a large protease complex with broad specificity involved in protein degradation. This is Proteasome subunit alpha from Mycolicibacterium vanbaalenii (strain DSM 7251 / JCM 13017 / BCRC 16820 / KCTC 9966 / NRRL B-24157 / PYR-1) (Mycobacterium vanbaalenii).